The sequence spans 121 residues: Putative iron-sulfur cluster insertion protein ErpA (121 aa).

Iron-sulfur cluster contacts are provided by cysteine 49, cysteine 113, and cysteine 115.

The protein belongs to the HesB/IscA family. Homodimer. Requires iron-sulfur cluster as cofactor.

Functionally, required for insertion of 4Fe-4S clusters. The polypeptide is Putative iron-sulfur cluster insertion protein ErpA (Nitrosomonas eutropha (strain DSM 101675 / C91 / Nm57)).